We begin with the raw amino-acid sequence, 524 residues long: Light-independent protochlorophyllide reductase subunit B (524 aa).

Aspartate 36 contacts [4Fe-4S] cluster. The active-site Proton donor is aspartate 290. 425–426 (GL) provides a ligand contact to substrate.

This sequence belongs to the ChlB/BchB/BchZ family. Protochlorophyllide reductase is composed of three subunits; ChlL, ChlN and ChlB. Forms a heterotetramer of two ChlB and two ChlN subunits. [4Fe-4S] cluster serves as cofactor.

It carries out the reaction chlorophyllide a + oxidized 2[4Fe-4S]-[ferredoxin] + 2 ADP + 2 phosphate = protochlorophyllide a + reduced 2[4Fe-4S]-[ferredoxin] + 2 ATP + 2 H2O. It participates in porphyrin-containing compound metabolism; chlorophyll biosynthesis (light-independent). Its function is as follows. Component of the dark-operative protochlorophyllide reductase (DPOR) that uses Mg-ATP and reduced ferredoxin to reduce ring D of protochlorophyllide (Pchlide) to form chlorophyllide a (Chlide). This reaction is light-independent. The NB-protein (ChlN-ChlB) is the catalytic component of the complex. This chain is Light-independent protochlorophyllide reductase subunit B, found in Synechococcus sp. (strain CC9605).